The sequence spans 485 residues: Ribosomal protein uS12 methylthiotransferase RimO (485 aa).

The 111-residue stretch at 14–124 (PKVGFISLGC…VMAHVRELLP (111 aa)) folds into the MTTase N-terminal domain. Positions 23, 59, 88, 167, 171, and 174 each coordinate [4Fe-4S] cluster. Residues 153-389 (LTPRHYAYVK…MEVAQRISRE (237 aa)) form the Radical SAM core domain. The TRAM domain maps to 392 to 468 (AEKVGRVLDV…EYDLYGEVIH (77 aa)).

The protein belongs to the methylthiotransferase family. RimO subfamily. Requires [4Fe-4S] cluster as cofactor.

It is found in the cytoplasm. The enzyme catalyses L-aspartate(89)-[ribosomal protein uS12]-hydrogen + (sulfur carrier)-SH + AH2 + 2 S-adenosyl-L-methionine = 3-methylsulfanyl-L-aspartate(89)-[ribosomal protein uS12]-hydrogen + (sulfur carrier)-H + 5'-deoxyadenosine + L-methionine + A + S-adenosyl-L-homocysteine + 2 H(+). Its function is as follows. Catalyzes the methylthiolation of an aspartic acid residue of ribosomal protein uS12. The protein is Ribosomal protein uS12 methylthiotransferase RimO of Deinococcus geothermalis (strain DSM 11300 / CIP 105573 / AG-3a).